We begin with the raw amino-acid sequence, 280 residues long: Shikimate dehydrogenase (NADP(+)) (280 aa).

Shikimate contacts are provided by residues 19-21 (SFS) and threonine 66. Lysine 70 acts as the Proton acceptor in catalysis. Glutamate 82 is a binding site for NADP(+). Asparagine 91 and aspartate 106 together coordinate shikimate. NADP(+) contacts are provided by residues 130–134 (GSGGA) and leucine 222. A shikimate-binding site is contributed by tyrosine 224. Glycine 245 serves as a coordination point for NADP(+).

It belongs to the shikimate dehydrogenase family. As to quaternary structure, homodimer.

It catalyses the reaction shikimate + NADP(+) = 3-dehydroshikimate + NADPH + H(+). It functions in the pathway metabolic intermediate biosynthesis; chorismate biosynthesis; chorismate from D-erythrose 4-phosphate and phosphoenolpyruvate: step 4/7. Its function is as follows. Involved in the biosynthesis of the chorismate, which leads to the biosynthesis of aromatic amino acids. Catalyzes the reversible NADPH linked reduction of 3-dehydroshikimate (DHSA) to yield shikimate (SA). The polypeptide is Shikimate dehydrogenase (NADP(+)) (Methanococcus maripaludis (strain C7 / ATCC BAA-1331)).